Consider the following 397-residue polypeptide: Enoyl-[acyl-carrier-protein] reductase [NADH] (397 aa).

Residues 48-53 (GASTGY), 74-75 (FE), 111-112 (DA), and 139-140 (VA) contribute to the NAD(+) site. Y225 contacts substrate. Y235 (proton donor) is an active-site residue. Residues K244 and 273–275 (VVT) contribute to the NAD(+) site.

This sequence belongs to the TER reductase family. Monomer.

It catalyses the reaction a 2,3-saturated acyl-[ACP] + NAD(+) = a (2E)-enoyl-[ACP] + NADH + H(+). The protein operates within lipid metabolism; fatty acid biosynthesis. Involved in the final reduction of the elongation cycle of fatty acid synthesis (FAS II). Catalyzes the reduction of a carbon-carbon double bond in an enoyl moiety that is covalently linked to an acyl carrier protein (ACP). The polypeptide is Enoyl-[acyl-carrier-protein] reductase [NADH] (Burkholderia mallei (strain NCTC 10247)).